The following is a 450-amino-acid chain: Probable malate:quinone oxidoreductase (450 aa).

The protein belongs to the MQO family. FAD serves as cofactor.

The catalysed reaction is (S)-malate + a quinone = a quinol + oxaloacetate. The protein operates within carbohydrate metabolism; tricarboxylic acid cycle; oxaloacetate from (S)-malate (quinone route): step 1/1. This chain is Probable malate:quinone oxidoreductase, found in Helicobacter acinonychis (strain Sheeba).